The chain runs to 410 residues: 2-oxoisovalerate dehydrogenase subunit alpha (410 aa).

Belongs to the BCKDHA family. As to quaternary structure, heterodimer of an alpha and a beta chain. Requires thiamine diphosphate as cofactor.

It carries out the reaction N(6)-[(R)-lipoyl]-L-lysyl-[protein] + 3-methyl-2-oxobutanoate + H(+) = N(6)-[(R)-S(8)-2-methylpropanoyldihydrolipoyl]-L-lysyl-[protein] + CO2. Functionally, the branched-chain alpha-keto dehydrogenase complex catalyzes the overall conversion of alpha-keto acids to acyl-CoA and CO(2). It contains multiple copies of three enzymatic components: branched-chain alpha-keto acid decarboxylase (E1), lipoamide acyltransferase (E2) and lipoamide dehydrogenase (E3). The protein is 2-oxoisovalerate dehydrogenase subunit alpha (bkdA1) of Pseudomonas aeruginosa (strain ATCC 15692 / DSM 22644 / CIP 104116 / JCM 14847 / LMG 12228 / 1C / PRS 101 / PAO1).